Reading from the N-terminus, the 86-residue chain is Large ribosomal subunit protein uL23 (86 aa).

The protein belongs to the universal ribosomal protein uL23 family. Part of the 50S ribosomal subunit. Contacts protein L29.

Functionally, binds to 23S rRNA. One of the proteins that surrounds the polypeptide exit tunnel on the outside of the ribosome. This chain is Large ribosomal subunit protein uL23, found in Pyrococcus furiosus (strain ATCC 43587 / DSM 3638 / JCM 8422 / Vc1).